A 138-amino-acid polypeptide reads, in one-letter code: Putative pre-16S rRNA nuclease (138 aa).

This sequence belongs to the YqgF nuclease family.

The protein localises to the cytoplasm. In terms of biological role, could be a nuclease involved in processing of the 5'-end of pre-16S rRNA. This chain is Putative pre-16S rRNA nuclease, found in Bacteroides fragilis (strain ATCC 25285 / DSM 2151 / CCUG 4856 / JCM 11019 / LMG 10263 / NCTC 9343 / Onslow / VPI 2553 / EN-2).